We begin with the raw amino-acid sequence, 271 residues long: Colicin-M (271 aa).

A TonB box motif is present at residues 2 to 9 (ETLTVHAP).

Colicins are polypeptide toxins produced by and active against E.coli and closely related bacteria. Functionally, this is a calcium-requiring inhibitor for murein biosynthesis; it causes lysis of sensitive cells accompanied by murein degradation. The target site is possibly the cytoplasmic membrane. In Escherichia coli, this protein is Colicin-M (cma).